Here is a 650-residue protein sequence, read N- to C-terminus: Macrolide export ATP-binding/permease protein MacB (650 aa).

The ABC transporter domain maps to 5–243 (LELKDIRRSY…AGGTEPVVNT (239 aa)). Residue 41–48 (GASGSGKS) coordinates ATP. 5 helical membrane passes run 273 to 293 (LLTMLGIIIGIASVVSIVVVG), 523 to 543 (LFLTLVAVISLVVGGIGVMNI), 554 to 574 (ANDIPMDVGAGASYVLYHLFF), 580 to 600 (VLPAVGGALGITLSLLIAFTL), and 613 to 633 (PLALLLAFLCSTVTGILFGWL).

This sequence belongs to the ABC transporter superfamily. Macrolide exporter (TC 3.A.1.122) family. Homodimer. Part of the tripartite efflux system MacAB-TolC, which is composed of an inner membrane transporter, MacB, a periplasmic membrane fusion protein, MacA, and an outer membrane component, TolC. The complex forms a large protein conduit and can translocate molecules across both the inner and outer membranes. Interacts with MacA.

It is found in the cell inner membrane. Its function is as follows. Part of the tripartite efflux system MacAB-TolC. MacB is a non-canonical ABC transporter that contains transmembrane domains (TMD), which form a pore in the inner membrane, and an ATP-binding domain (NBD), which is responsible for energy generation. Confers resistance against macrolides. The polypeptide is Macrolide export ATP-binding/permease protein MacB (Shigella dysenteriae serotype 1 (strain Sd197)).